Here is a 357-residue protein sequence, read N- to C-terminus: UDP-N-acetylglucosamine--N-acetylmuramyl-(pentapeptide) pyrophosphoryl-undecaprenol N-acetylglucosamine transferase (357 aa).

Residues 7–9 (TGG), N119, R159, S187, I241, and Q286 contribute to the UDP-N-acetyl-alpha-D-glucosamine site.

It belongs to the glycosyltransferase 28 family. MurG subfamily.

Its subcellular location is the cell inner membrane. The catalysed reaction is di-trans,octa-cis-undecaprenyl diphospho-N-acetyl-alpha-D-muramoyl-L-alanyl-D-glutamyl-meso-2,6-diaminopimeloyl-D-alanyl-D-alanine + UDP-N-acetyl-alpha-D-glucosamine = di-trans,octa-cis-undecaprenyl diphospho-[N-acetyl-alpha-D-glucosaminyl-(1-&gt;4)]-N-acetyl-alpha-D-muramoyl-L-alanyl-D-glutamyl-meso-2,6-diaminopimeloyl-D-alanyl-D-alanine + UDP + H(+). The protein operates within cell wall biogenesis; peptidoglycan biosynthesis. Its function is as follows. Cell wall formation. Catalyzes the transfer of a GlcNAc subunit on undecaprenyl-pyrophosphoryl-MurNAc-pentapeptide (lipid intermediate I) to form undecaprenyl-pyrophosphoryl-MurNAc-(pentapeptide)GlcNAc (lipid intermediate II). The protein is UDP-N-acetylglucosamine--N-acetylmuramyl-(pentapeptide) pyrophosphoryl-undecaprenol N-acetylglucosamine transferase of Nitrosomonas europaea (strain ATCC 19718 / CIP 103999 / KCTC 2705 / NBRC 14298).